A 435-amino-acid polypeptide reads, in one-letter code: Trigger factor (435 aa).

Positions 163 to 248 (GELASVTFSA…VHAVKERKMP (86 aa)) constitute a PPIase FKBP-type domain.

It belongs to the FKBP-type PPIase family. Tig subfamily.

The protein localises to the cytoplasm. It catalyses the reaction [protein]-peptidylproline (omega=180) = [protein]-peptidylproline (omega=0). Involved in protein export. Acts as a chaperone by maintaining the newly synthesized protein in an open conformation. Functions as a peptidyl-prolyl cis-trans isomerase. The polypeptide is Trigger factor (Maridesulfovibrio salexigens (strain ATCC 14822 / DSM 2638 / NCIMB 8403 / VKM B-1763) (Desulfovibrio salexigens)).